The primary structure comprises 70 residues: Large ribosomal subunit protein bL31 (70 aa).

Belongs to the bacterial ribosomal protein bL31 family. Type A subfamily. In terms of assembly, part of the 50S ribosomal subunit.

In terms of biological role, binds the 23S rRNA. This is Large ribosomal subunit protein bL31 from Mycoplasma mobile (strain ATCC 43663 / 163K / NCTC 11711) (Mesomycoplasma mobile).